The following is a 467-amino-acid chain: Dihydrolipoyl dehydrogenase (467 aa).

FAD contacts are provided by residues 33-41 (EPKYWGGIC), Lys50, and Gly113. Cysteines 41 and 46 form a disulfide. NAD(+) contacts are provided by residues 181–185 (GAGAI), Glu204, and 269–272 (AIGF). Residues Asp312 and Ala320 each coordinate FAD. His446 functions as the Proton acceptor in the catalytic mechanism.

This sequence belongs to the class-I pyridine nucleotide-disulfide oxidoreductase family. Homodimer. Part of the PDH complex, consisting of multiple copies of AceE (E1), DlaT (E2) and Lpd (E3), and of the BCKADH complex, consisting of multiple copies of BkdA/BkdB (E1), BkdC (E2) and Lpd (E3). FAD serves as cofactor.

Its subcellular location is the cytoplasm. It carries out the reaction N(6)-[(R)-dihydrolipoyl]-L-lysyl-[protein] + NAD(+) = N(6)-[(R)-lipoyl]-L-lysyl-[protein] + NADH + H(+). Its function is as follows. Lipoamide dehydrogenase is a component of the alpha-ketoacid dehydrogenase complexes. Catalyzes the reoxidation of dihydrolipoyl groups which are covalently attached to the lipoate acyltransferase components (E2) of the complexes. The polypeptide is Dihydrolipoyl dehydrogenase (lpd) (Mycobacterium leprae (strain TN)).